The sequence spans 105 residues: Nitrogen fixation nifHD2 region GlnB-like protein 1 (105 aa).

The protein belongs to the P(II) protein family.

Functionally, could be involved in the regulation of nitrogen fixation. This Methanosarcina barkeri protein is Nitrogen fixation nifHD2 region GlnB-like protein 1.